The primary structure comprises 284 residues: NAD kinase (284 aa).

Asp65 acts as the Proton acceptor in catalysis. NAD(+) is bound by residues 65-66 (DG), 139-140 (ND), Arg150, Arg167, Asp169, and Gln239.

The protein belongs to the NAD kinase family. It depends on a divalent metal cation as a cofactor.

It is found in the cytoplasm. It carries out the reaction NAD(+) + ATP = ADP + NADP(+) + H(+). Functionally, involved in the regulation of the intracellular balance of NAD and NADP, and is a key enzyme in the biosynthesis of NADP. Catalyzes specifically the phosphorylation on 2'-hydroxyl of the adenosine moiety of NAD to yield NADP. The chain is NAD kinase from Desulfatibacillum aliphaticivorans.